The following is an 864-amino-acid chain: NT-3 growth factor receptor (864 aa).

A signal peptide spans 1–31; sequence MDVSLCPAKCSFWRIFLLGSVWLDYVGSVLA. 2 disulfide bridges follow: Cys32–Cys38 and Cys36–Cys45. Residues 32-429 are Extracellular-facing; sequence CPANCVCSKT…TVTHKPEEDT (398 aa). Asn68, Asn72, and Asn79 each carry an N-linked (GlcNAc...) asparagine glycan. LRR repeat units lie at residues 104-125 and 128-149; these read GLQKLTIKNSGLRNIQPRAFAK and HLRYINLSSNRLTTLSWQLFQT. N-linked (GlcNAc...) asparagine glycans are attached at residues Asn133 and Asn163. The 50-residue stretch at 160 to 209 folds into the LRRCT domain; that stretch reads NFFNCSCDIRWMQLWQEQGEARLDSQSLYCISADGSQLPLFRMNISQCDL. Cystine bridges form between Cys164-Cys189 and Cys166-Cys207. Asn203, Asn218, Asn232, Asn259, Asn267, Asn272, and Asn294 each carry an N-linked (GlcNAc...) asparagine glycan. Ig-like C2-type domains follow at residues 210 to 300 and 309 to 382; these read PEIS…VALT and SLVE…IAKN. The cysteines at positions 231 and 284 are disulfide-linked. The cysteines at positions 320 and 362 are disulfide-linked. 2 N-linked (GlcNAc...) asparagine glycosylation sites follow: Asn375 and Asn388. Residues 430 to 453 form a helical membrane-spanning segment; the sequence is FGVSIAVGLAAFACVLLVVLFIMI. The Cytoplasmic portion of the chain corresponds to 454–864; that stretch reads NKYGRRSKFG…ATPIYLDILG (411 aa). The residue at position 493 (Ser493) is a Phosphoserine. Tyr516 is subject to Phosphotyrosine; by autocatalysis. The 316-residue stretch at 538–853 folds into the Protein kinase domain; it reads IVLKRELGEG…EIYKILHALG (316 aa). Residues 544–552 and Lys572 each bind ATP; that span reads LGEGAFGKV. Catalysis depends on Asp679, which acts as the Proton acceptor. 4 positions are modified to phosphotyrosine; by autocatalysis: Tyr705, Tyr709, Tyr710, and Tyr859.

Belongs to the protein kinase superfamily. Tyr protein kinase family. Insulin receptor subfamily. In terms of assembly, exists in a dynamic equilibrium between monomeric (low affinity) and dimeric (high affinity) structures. Binds SH2B2. Interacts with SQSTM1 and KIDINS220. Interacts with PTPRS. Interacts with MAPK8IP3/JIP3. Post-translationally, ligand-mediated auto-phosphorylation. As to expression, widely expressed, mainly in the nervous tissue.

The protein resides in the membrane. The catalysed reaction is L-tyrosyl-[protein] + ATP = O-phospho-L-tyrosyl-[protein] + ADP + H(+). Receptor tyrosine kinase involved in nervous system and probably heart development. Upon binding of its ligand NTF3/neurotrophin-3, NTRK3 autophosphorylates and activates different signaling pathways, including the phosphatidylinositol 3-kinase/AKT and the MAPK pathways, that control cell survival and differentiation. NTRK3 isoforms containing insertions within the kinase domain can autophosphorylate in response to NTF3/neurotrophin-3, but cannot mediate downstream phenotypic responses. The chain is NT-3 growth factor receptor (Ntrk3) from Rattus norvegicus (Rat).